Reading from the N-terminus, the 623-residue chain is Mu-like prophage FluMu defective tail fiber protein (623 aa).

The protein to phage Mu protein S.

The polypeptide is Mu-like prophage FluMu defective tail fiber protein (Haemophilus influenzae (strain ATCC 51907 / DSM 11121 / KW20 / Rd)).